The primary structure comprises 426 residues: Serine--tRNA ligase (426 aa).

Residues 1-15 are compositionally biased toward basic and acidic residues; sequence MIDVKDLSENPDKFR. Positions 1 to 20 are disordered; the sequence is MIDVKDLSENPDKFRASQRA. L-serine is bound at residue 228–230; that stretch reads TSE. ATP contacts are provided by residues 259 to 261 and V275; that span reads RRE. Residue E282 participates in L-serine binding. 346–349 is a binding site for ATP; the sequence is ELTS. Residue T386 participates in L-serine binding.

Belongs to the class-II aminoacyl-tRNA synthetase family. Type-1 seryl-tRNA synthetase subfamily. In terms of assembly, homodimer. The tRNA molecule binds across the dimer.

It localises to the cytoplasm. The enzyme catalyses tRNA(Ser) + L-serine + ATP = L-seryl-tRNA(Ser) + AMP + diphosphate + H(+). The catalysed reaction is tRNA(Sec) + L-serine + ATP = L-seryl-tRNA(Sec) + AMP + diphosphate + H(+). The protein operates within aminoacyl-tRNA biosynthesis; selenocysteinyl-tRNA(Sec) biosynthesis; L-seryl-tRNA(Sec) from L-serine and tRNA(Sec): step 1/1. Catalyzes the attachment of serine to tRNA(Ser). Is also able to aminoacylate tRNA(Sec) with serine, to form the misacylated tRNA L-seryl-tRNA(Sec), which will be further converted into selenocysteinyl-tRNA(Sec). The polypeptide is Serine--tRNA ligase (Paenarthrobacter aurescens (strain TC1)).